The sequence spans 377 residues: Nitric oxide reductase FlRd-NAD(+) reductase (377 aa).

The protein belongs to the FAD-dependent oxidoreductase family. It depends on FAD as a cofactor.

The protein resides in the cytoplasm. The catalysed reaction is 2 reduced [nitric oxide reductase rubredoxin domain] + NAD(+) + H(+) = 2 oxidized [nitric oxide reductase rubredoxin domain] + NADH. Its pathway is nitrogen metabolism; nitric oxide reduction. Functionally, one of at least two accessory proteins for anaerobic nitric oxide (NO) reductase. Reduces the rubredoxin moiety of NO reductase. The polypeptide is Nitric oxide reductase FlRd-NAD(+) reductase (Salmonella paratyphi C (strain RKS4594)).